A 140-amino-acid polypeptide reads, in one-letter code: uncharacterized protein (140 aa).

Residue asparagine 86 is glycosylated (N-linked (GlcNAc...) asparagine; by host). Residues 92 to 112 (IFNGLGFILIVIFIYLLLITL) traverse the membrane as a helical segment.

This sequence belongs to the asfivirus B117L family.

It is found in the host membrane. The protein localises to the virion. This is an uncharacterized protein from African swine fever virus (isolate Pig/Kenya/KEN-50/1950) (ASFV).